Consider the following 247-residue polypeptide: ATP synthase subunit a, chloroplastic (247 aa).

The next 5 membrane-spanning stretches (helical) occupy residues 38–58 (QVLI…ALAV), 95–115 (VPFI…GALL), 134–154 (INTT…AGLA), 199–219 (LVVV…VMFL), and 220–240 (GLFT…AYIG).

The protein belongs to the ATPase A chain family. In terms of assembly, F-type ATPases have 2 components, CF(1) - the catalytic core - and CF(0) - the membrane proton channel. CF(1) has five subunits: alpha(3), beta(3), gamma(1), delta(1), epsilon(1). CF(0) has four main subunits: a, b, b' and c.

It localises to the plastid. It is found in the chloroplast thylakoid membrane. Key component of the proton channel; it plays a direct role in the translocation of protons across the membrane. In Trachelium caeruleum (Blue throatwort), this protein is ATP synthase subunit a, chloroplastic.